We begin with the raw amino-acid sequence, 165 residues long: Ecotin-like protein 4 (165 aa).

This sequence belongs to the protease inhibitor I11 (ecotin) family.

The protein is Ecotin-like protein 4 of Trypanosoma brucei brucei (strain 927/4 GUTat10.1).